The chain runs to 348 residues: D-fructose 1,6-bisphosphatase class 2/sedoheptulose 1,7-bisphosphatase 2 (348 aa).

Residues D33, E57, D97, and E100 each coordinate Mn(2+). Substrate-binding positions include E100–T102, Y131, R176–R178, and D198–D200. Residue E225 coordinates Mn(2+).

Belongs to the FBPase class 2 family. In terms of assembly, homotetramer.

The catalysed reaction is beta-D-fructose 1,6-bisphosphate + H2O = beta-D-fructose 6-phosphate + phosphate. It carries out the reaction D-sedoheptulose 1,7-bisphosphate + H2O = D-sedoheptulose 7-phosphate + phosphate. Its pathway is carbohydrate biosynthesis; Calvin cycle. Its function is as follows. Catalyzes the hydrolysis of fructose 1,6-bisphosphate (Fru 1,6-P2) and sedoheptulose 1,7-bisphosphate (Sed 1,7-P2) to fructose 6-phosphate and sedoheptulose 7-phosphate, respectively. This Acaryochloris marina (strain MBIC 11017) protein is D-fructose 1,6-bisphosphatase class 2/sedoheptulose 1,7-bisphosphatase 2.